The chain runs to 486 residues: Receptor-interacting serine/threonine-protein kinase 3 (486 aa).

Ser-2 carries the post-translational modification Phosphoserine. The region spanning 22-292 is the Protein kinase domain; it reads LKKLEFVGKG…DCEPKTNEVY (271 aa). ATP is bound by residues 28 to 36 and Lys-51; that span reads VGKGGFGVV. Asp-143 functions as the Proton acceptor in the catalytic mechanism. Ser-165 carries the post-translational modification Phosphoserine. The residue at position 187 (Thr-187) is a Phosphothreonine. Ser-204 is modified (phosphoserine; by autocatalysis). Thr-231 bears the Phosphothreonine; by autocatalysis mark. Ser-232 carries the post-translational modification Phosphoserine; by autocatalysis. Residue Thr-257 is modified to Phosphothreonine. A phosphoserine mark is found at Ser-304 and Ser-326. A disordered region spans residues 312–333; the sequence is QHRSSGRNLSAREPSQRGTEMD. The residue at position 338 (Thr-338) is a Phosphothreonine. Residues 349-388 are disordered; the sequence is LEEPSGPVPGKCPERQAQDTSVGPATPARTSSDPVAGTPQ. 3 positions are modified to phosphoserine: Ser-353, Ser-369, and Ser-380. A compositionally biased stretch (polar residues) spans 366–381; sequence QDTSVGPATPARTSSD. Thr-392 bears the Phosphothreonine mark. The short motif at 440–461 is the RIP homotypic interaction motif (RHIM) element; sequence LVFNNCSEVQIGNYNSLVAPPR. The disordered stretch occupies residues 462–486; that stretch reads TTASSSAKYDQAQFGRGRGWQPFHK. Arg-477 carries the post-translational modification Omega-N-methylarginine.

This sequence belongs to the protein kinase superfamily. TKL Ser/Thr protein kinase family. As to quaternary structure, interacts (via RIP homotypic interaction motif) with RIPK1 (via RIP homotypic interaction motif); this interaction induces RIPK1 phosphorylation and formation of a RIPK1-RIPK3 necrosis-inducing complex. Interacts with MLKL; the interaction is direct and triggers necroptosis. Interacts with ZBP1 (via RIP homotypic interaction motif); interaction with ZBP1 activates RIPK3, triggering necroptosis. Upon TNF-induced necrosis, the RIPK1-RIPK3 dimer further interacts with PGAM5 and MLKL; the formation of this complex leads to PGAM5 phosphorylation and increase in PGAM5 phosphatase activity. Binds TRAF2 and is recruited to the TNFR-1 signaling complex. Interacts with PYGL, GLUL and GLUD1; these interactions result in activation of these metabolic enzymes. Interacts with BIRC2/c-IAP1, BIRC3/c-IAP2 and XIAP/BIRC4. Interacts with ARHGEF2. Interacts with PELI1 (via atypical FHA domain); the phosphorylated form at Thr-187 binds preferentially to PELI1. Interacts with BUB1B, TRAF2 and STUB1. Interacts with CASP6. Component of the AIM2 PANoptosome complex, a multiprotein complex that drives inflammatory cell death (PANoptosis). (Microbial infection) Interacts (via RIP homotypic interaction motif) with murid herpesvirus protein RIR1; this interaction disrupts RIP3-RIP1 interactions characteristic of TNF-alpha induced necroptosis, thereby suppressing this death pathway. In terms of processing, RIPK1 and RIPK3 undergo reciprocal auto- and trans-phosphorylation. Autophosphorylated following interaction with ZBP1. Phosphorylation of Ser-204 plays a role in the necroptotic function of RIPK3. Autophosphorylates at Thr-231 and Ser-232 following activation by ZBP1: phosphorylation at these sites is a hallmark of necroptosis and is required for binding MLKL. Phosphorylation at Thr-187 is important for its kinase activity, interaction with PELI1 and for its ability to mediate TNF-induced necroptosis. Post-translationally, polyubiquitinated with 'Lys-48' and 'Lys-63'-linked chains by BIRC2/c-IAP1 and BIRC3/c-IAP2, leading to activation of NF-kappa-B. Ubiquitinated by STUB1 leading to its subsequent proteasome-dependent degradation. As to expression, expressed in embryo and in adult spleen, liver, testis, heart, brain and lung.

It is found in the cytoplasm. The protein localises to the cytosol. Its subcellular location is the nucleus. It catalyses the reaction L-seryl-[protein] + ATP = O-phospho-L-seryl-[protein] + ADP + H(+). The catalysed reaction is L-threonyl-[protein] + ATP = O-phospho-L-threonyl-[protein] + ADP + H(+). With respect to regulation, activity is stimulated by ZBP1, which senses double-stranded Z-RNA structures. RIPK3-dependent necroptosis is inhibited by RIPK1: RIPK1 prevents the ZBP1-induced activation of RIPK3 via FADD-mediated recruitment of CASP8, which cleaves RIPK1 and limits TNF-induced necroptosis. Inhibited by type II inhibitor 1-(4-fluorophenyl)-N-[3-fluoro-4-(1H-pyrrolo[2,3-b]pyridin-4-yloxy)phenyl]-2-oxo-1,2-dihydropyridine-3-carboxamide. Functionally, serine/threonine-protein kinase that activates necroptosis and apoptosis, two parallel forms of cell death. Necroptosis, a programmed cell death process in response to death-inducing TNF-alpha family members, is triggered by RIPK3 following activation by ZBP1. Activated RIPK3 forms a necrosis-inducing complex and mediates phosphorylation of MLKL, promoting MLKL localization to the plasma membrane and execution of programmed necrosis characterized by calcium influx and plasma membrane damage. In addition to TNF-induced necroptosis, necroptosis can also take place in the nucleus in response to orthomyxoviruses infection: following ZBP1 activation, which senses double-stranded Z-RNA structures, nuclear RIPK3 catalyzes phosphorylation and activation of MLKL, promoting disruption of the nuclear envelope and leakage of cellular DNA into the cytosol. Also regulates apoptosis: apoptosis depends on RIPK1, FADD and CASP8, and is independent of MLKL and RIPK3 kinase activity. Phosphorylates RIPK1: RIPK1 and RIPK3 undergo reciprocal auto- and trans-phosphorylation. In some cell types, also able to restrict viral replication by promoting cell death-independent responses. In response to flavivirus infection in neurons, promotes a cell death-independent pathway that restricts viral replication: together with ZBP1, promotes a death-independent transcriptional program that modifies the cellular metabolism via up-regulation expression of the enzyme ACOD1/IRG1 and production of the metabolite itaconate. Itaconate inhibits the activity of succinate dehydrogenase, generating a metabolic state in neurons that suppresses replication of viral genomes. RIPK3 binds to and enhances the activity of three metabolic enzymes: GLUL, GLUD1, and PYGL. These metabolic enzymes may eventually stimulate the tricarboxylic acid cycle and oxidative phosphorylation, which could result in enhanced ROS production. This chain is Receptor-interacting serine/threonine-protein kinase 3, found in Mus musculus (Mouse).